Here is a 545-residue protein sequence, read N- to C-terminus: MGSRTKFCLTLFLVSVLILCAGLALAKTDPELKQCKHQCKVQRQYDEEQKEQCAKGCEKYYKEKKGREQEEEEEEEWGSGRGRGDEFSTHEPGEKRLSQCMKQCERQDGGQQKQLCRFRCQEKYKKERREHSYSRDEEEEEEGDEEQEEEDENPYVFEDEHFTTRVKTEQGKVVVLPKFTKRSKLLRGLEKYRLAFLVANPQAFVVPNHMDADSIFFVSWGRGTITKIRENKRESMNVKQGDIIRIRAGTPFYIVNTDENEKLYIVKLLQPVNLPGHYEVFHGPGGENPESFYRAFSREVLEAALKTPRDKLEKLFEKQDEGAIVKASKEQIRAMSRRGEGPSIWPFTGKSTGTFNLFKKDPSQSNNYGQLFESEFKDYPPLQELDIMVSYVNITKGGMSGPFYNSRATKIAIVVSGEGRLEIACPHLSSSKNSGQEKSGPSYKKLSSSIRTDSVFVVPAGHPFVTVASGNQNLEILCFEVNAEGNIRYTLAGKKNIIEVMEKEAKELAFKTKGEEVDKVFGKQDEEFFFQGPKWRQHQQGRADE.

An N-terminal signal peptide occupies residues 1 to 25 (MGSRTKFCLTLFLVSVLILCAGLAL). 2 disordered regions span residues 62–93 (KEKKGREQEEEEEEEWGSGRGRGDEFSTHEPG) and 129–154 (REHSYSRDEEEEEEGDEEQEEEDENP). Positions 82 to 93 (GRGDEFSTHEPG) are enriched in basic and acidic residues. Positions 136-153 (DEEEEEEGDEEQEEEDEN) are enriched in acidic residues. The Cupin type-1 2 domain maps to 354-517 (TFNLFKKDPS…LAFKTKGEEV (164 aa)).

Belongs to the 7S seed storage protein family. In terms of tissue distribution, expressed in seed.

Functionally, seed storage protein. The chain is Vicilin Pis v 3.0101 from Pistacia vera (Pistachio).